Reading from the N-terminus, the 351-residue chain is MPRRNLLKGFKRPKVLEFLSENSSECYGKFTASPFETGFGTTVGNCLRRVLLSSIQGYAVTGVRITSFDADGVAHFISSEFEQIPHVREDTLEILNNFKRLRFLLPQGAESSTFTYEFRGAVSLTGKDFAKKFQLEVLSQDLLIMEMMDGAHVEVELHVEFGRGYVPAESHDRYADLVGVIPVDAIFSPVLRVRYDIQSCRVGQRGDYDQLSLEVWTDGTVRPEDAIAEAAKIIKEHFTVFVNFDETALDLEDEPEEDDPAVLELLNTKIADVDFSVRARNCLLTMGIKTLGELTRISEQTLANTRNVGKKSLSEIQGKLQEYNLRLGMADYNHVGVVSRLMRQKEEIDEA.

Residues 1 to 245 (MPRRNLLKGF…EHFTVFVNFD (245 aa)) are alpha N-terminal domain (alpha-NTD). An alpha C-terminal domain (alpha-CTD) region spans residues 261–351 (AVLELLNTKI…MRQKEEIDEA (91 aa)).

Belongs to the RNA polymerase alpha chain family. Homodimer. The RNAP catalytic core consists of 2 alpha, 1 beta, 1 beta' and 1 omega subunit. When a sigma factor is associated with the core the holoenzyme is formed, which can initiate transcription.

It catalyses the reaction RNA(n) + a ribonucleoside 5'-triphosphate = RNA(n+1) + diphosphate. Its function is as follows. DNA-dependent RNA polymerase catalyzes the transcription of DNA into RNA using the four ribonucleoside triphosphates as substrates. The protein is DNA-directed RNA polymerase subunit alpha of Treponema pallidum (strain Nichols).